We begin with the raw amino-acid sequence, 150 residues long: Endoribonuclease YbeY (150 aa).

3 residues coordinate Zn(2+): histidine 108, histidine 112, and histidine 118.

It belongs to the endoribonuclease YbeY family. The cofactor is Zn(2+).

Its subcellular location is the cytoplasm. Its function is as follows. Single strand-specific metallo-endoribonuclease involved in late-stage 70S ribosome quality control and in maturation of the 3' terminus of the 16S rRNA. This Methylococcus capsulatus (strain ATCC 33009 / NCIMB 11132 / Bath) protein is Endoribonuclease YbeY.